Here is a 155-residue protein sequence, read N- to C-terminus: 6,7-dimethyl-8-ribityllumazine synthase (155 aa).

5-amino-6-(D-ribitylamino)uracil is bound by residues tryptophan 18, 52-54 (AFE), and 76-78 (LVV). Arginine 84 serves as the catalytic Proton donor. Residue serine 109 coordinates 5-amino-6-(D-ribitylamino)uracil. Histidine 123 is a binding site for (2S)-2-hydroxy-3-oxobutyl phosphate.

The protein belongs to the DMRL synthase family.

The catalysed reaction is (2S)-2-hydroxy-3-oxobutyl phosphate + 5-amino-6-(D-ribitylamino)uracil = 6,7-dimethyl-8-(1-D-ribityl)lumazine + phosphate + 2 H2O + H(+). Its pathway is cofactor biosynthesis; riboflavin biosynthesis; riboflavin from 2-hydroxy-3-oxobutyl phosphate and 5-amino-6-(D-ribitylamino)uracil: step 1/2. Catalyzes the formation of 6,7-dimethyl-8-ribityllumazine by condensation of 5-amino-6-(D-ribitylamino)uracil with 3,4-dihydroxy-2-butanone 4-phosphate. This is the penultimate step in the biosynthesis of riboflavin. The chain is 6,7-dimethyl-8-ribityllumazine synthase from Rhodococcus erythropolis (Arthrobacter picolinophilus).